The following is a 629-amino-acid chain: Kelch-like protein 8 (629 aa).

Residues 1 to 10 are compositionally biased toward polar residues; the sequence is MASESTNGKQ. The segment at 1-40 is disordered; it reads MASESTNGKQARSHVTKGRRQYQHQHQQQQQQQQQVRSRS. Residue Ala2 is modified to N-acetylalanine. A compositionally biased stretch (basic residues) spans 11–23; sequence ARSHVTKGRRQYQ. Positions 24–35 are enriched in low complexity; the sequence is HQHQQQQQQQQQ. The region spanning 76–143 is the BTB domain; that stretch reads CDVTLKVGSK…VYSSRLTLTV (68 aa). Positions 178-279 constitute a BACK domain; the sequence is CLAVRAFAES…LPVDFLMGVV (102 aa). Kelch repeat units lie at residues 328 to 375, 376 to 422, 424 to 469, 471 to 516, 517 to 563, and 565 to 610; these read VLFC…SVEG, KVYA…SLGG, IYAI…ALIN, VYAV…ELHG, CLYV…TVMG, and IFAV…VCDC.

As to quaternary structure, component of the BCR(KLHL8) E3 ubiquitin ligase complex, at least composed of CUL3, KLHL8 and RBX1. Interacts with RAPSN.

It participates in protein modification; protein ubiquitination. Its function is as follows. Substrate-specific adapter of a BCR (BTB-CUL3-RBX1) E3 ubiquitin ligase complex required for The BCR(KLHL8) ubiquitin ligase complex mediates ubiquitination and degradation of RAPSN. The sequence is that of Kelch-like protein 8 (Klhl8) from Mus musculus (Mouse).